A 360-amino-acid polypeptide reads, in one-letter code: Aminomethyltransferase (360 aa).

This sequence belongs to the GcvT family. In terms of assembly, the glycine cleavage system is composed of four proteins: P, T, L and H.

It catalyses the reaction N(6)-[(R)-S(8)-aminomethyldihydrolipoyl]-L-lysyl-[protein] + (6S)-5,6,7,8-tetrahydrofolate = N(6)-[(R)-dihydrolipoyl]-L-lysyl-[protein] + (6R)-5,10-methylene-5,6,7,8-tetrahydrofolate + NH4(+). The glycine cleavage system catalyzes the degradation of glycine. The sequence is that of Aminomethyltransferase from Flavobacterium psychrophilum (strain ATCC 49511 / DSM 21280 / CIP 103535 / JIP02/86).